The primary structure comprises 421 residues: Trimethyllysine dioxygenase, mitochondrial (421 aa).

The transit peptide at 1 to 15 (MWCHRLSHLQSRLQD) directs the protein to the mitochondrion. Lysine 236 is subject to N6-acetyllysine. Histidine 242, aspartate 244, and histidine 389 together coordinate Fe cation.

It belongs to the gamma-BBH/TMLD family. Homodimer. Fe(2+) is required as a cofactor. The cofactor is L-ascorbate.

It localises to the mitochondrion matrix. The enzyme catalyses N(6),N(6),N(6)-trimethyl-L-lysine + 2-oxoglutarate + O2 = (3S)-3-hydroxy-N(6),N(6),N(6)-trimethyl-L-lysine + succinate + CO2. Its pathway is amine and polyamine biosynthesis; carnitine biosynthesis. Converts trimethyllysine (TML) into hydroxytrimethyllysine (HTML). The polypeptide is Trimethyllysine dioxygenase, mitochondrial (TMLHE) (Bos taurus (Bovine)).